A 631-amino-acid polypeptide reads, in one-letter code: Phosphomethylpyrimidine synthase (631 aa).

Substrate contacts are provided by residues Asn-239, Met-268, Tyr-297, His-333, 353–355 (SRG), 394–397 (DGLR), and Glu-433. His-437 serves as a coordination point for Zn(2+). Tyr-460 contributes to the substrate binding site. A Zn(2+)-binding site is contributed by His-501. [4Fe-4S] cluster is bound by residues Cys-581, Cys-584, and Cys-589.

Belongs to the ThiC family. Homodimer. It depends on [4Fe-4S] cluster as a cofactor.

It catalyses the reaction 5-amino-1-(5-phospho-beta-D-ribosyl)imidazole + S-adenosyl-L-methionine = 4-amino-2-methyl-5-(phosphooxymethyl)pyrimidine + CO + 5'-deoxyadenosine + formate + L-methionine + 3 H(+). Its pathway is cofactor biosynthesis; thiamine diphosphate biosynthesis. Its function is as follows. Catalyzes the synthesis of the hydroxymethylpyrimidine phosphate (HMP-P) moiety of thiamine from aminoimidazole ribotide (AIR) in a radical S-adenosyl-L-methionine (SAM)-dependent reaction. This is Phosphomethylpyrimidine synthase from Escherichia coli O8 (strain IAI1).